We begin with the raw amino-acid sequence, 101 residues long: Small ribosomal subunit protein uS14 (101 aa).

It belongs to the universal ribosomal protein uS14 family. In terms of assembly, part of the 30S ribosomal subunit. Contacts proteins S3 and S10.

Its function is as follows. Binds 16S rRNA, required for the assembly of 30S particles and may also be responsible for determining the conformation of the 16S rRNA at the A site. The polypeptide is Small ribosomal subunit protein uS14 (Blochmanniella pennsylvanica (strain BPEN)).